A 127-amino-acid polypeptide reads, in one-letter code: Multiple antibiotic resistance protein MarA (127 aa).

One can recognise an HTH araC/xylS-type domain in the interval 12–110 (HSILDWIEDN…DVPPHKYRMT (99 aa)). 2 consecutive DNA-binding regions (H-T-H motif) follow at residues 29 to 50 (EKVS…KKET) and 77 to 100 (ILYL…KNYF).

Monomer.

Functionally, may be a transcriptional activator of genes involved in the multiple antibiotic resistance (Mar) phenotype. It can also activate genes such as sodA, zwf and micF. The chain is Multiple antibiotic resistance protein MarA (marA) from Escherichia coli (strain K12).